Reading from the N-terminus, the 418-residue chain is UDP-N-acetylglucosamine 1-carboxyvinyltransferase (418 aa).

22–23 (KN) is a binding site for phosphoenolpyruvate. UDP-N-acetyl-alpha-D-glucosamine is bound at residue Arg-92. The active-site Proton donor is the Cys-116. Cys-116 carries the post-translational modification 2-(S-cysteinyl)pyruvic acid O-phosphothioketal. Residues Asp-306 and Ile-328 each coordinate UDP-N-acetyl-alpha-D-glucosamine.

The protein belongs to the EPSP synthase family. MurA subfamily.

The protein localises to the cytoplasm. It catalyses the reaction phosphoenolpyruvate + UDP-N-acetyl-alpha-D-glucosamine = UDP-N-acetyl-3-O-(1-carboxyvinyl)-alpha-D-glucosamine + phosphate. It participates in cell wall biogenesis; peptidoglycan biosynthesis. In terms of biological role, cell wall formation. Adds enolpyruvyl to UDP-N-acetylglucosamine. This Solibacter usitatus (strain Ellin6076) protein is UDP-N-acetylglucosamine 1-carboxyvinyltransferase.